Reading from the N-terminus, the 72-residue chain is Large ribosomal subunit protein uL29 (72 aa).

This sequence belongs to the universal ribosomal protein uL29 family.

In Prochlorococcus marinus (strain AS9601), this protein is Large ribosomal subunit protein uL29.